The chain runs to 191 residues: Inosine triphosphate pyrophosphatase (191 aa).

ITP is bound at residue 12-17 (TGNKNK). Glutamate 40 provides a ligand contact to Mg(2+). ITP-binding positions include lysine 52, 68–69 (DS), lysine 85, 144–147 (FGWE), lysine 167, and 172–173 (HR).

It belongs to the HAM1 NTPase family. In terms of assembly, homodimer. Mg(2+) serves as cofactor. Requires Mn(2+) as cofactor.

It localises to the cytoplasm. It is found in the nucleus. The catalysed reaction is ITP + H2O = IMP + diphosphate + H(+). It carries out the reaction dITP + H2O = dIMP + diphosphate + H(+). The enzyme catalyses XTP + H2O = XMP + diphosphate + H(+). Its function is as follows. Pyrophosphatase that hydrolyzes non-canonical purine nucleotides such as inosine triphosphate (ITP), deoxyinosine triphosphate (dITP) or xanthosine 5'-triphosphate (XTP) to their respective monophosphate derivatives. The enzyme does not distinguish between the deoxy- and ribose forms. Probably excludes non-canonical purines from RNA and DNA precursor pools, thus preventing their incorporation into RNA and DNA and avoiding chromosomal lesions. The chain is Inosine triphosphate pyrophosphatase from Aspergillus oryzae (strain ATCC 42149 / RIB 40) (Yellow koji mold).